The primary structure comprises 324 residues: NAD(P)H-dependent D-xylose reductase XYR1 (324 aa).

Catalysis depends on Tyr50, which acts as the Proton donor. His112 contributes to the substrate binding site. Residues 168–169 (SN), 217–226 (SSFGPASFKE), and 273–283 (KSSREKTMKSN) each bind NAD(+).

Belongs to the aldo/keto reductase family.

The catalysed reaction is xylitol + NAD(+) = D-xylose + NADH + H(+). It carries out the reaction xylitol + NADP(+) = D-xylose + NADPH + H(+). Its pathway is carbohydrate metabolism; D-xylose degradation. Functionally, catalyzes the initial reaction in the xylose utilization pathway by reducing D-xylose into xylitol. Xylose is a major component of hemicelluloses such as xylan. Most fungi utilize D-xylose via three enzymatic reactions, xylose reductase (XR), xylitol dehydrogenase (XDH), and xylulokinase, to form xylulose 5-phosphate, which enters pentose phosphate pathway. The protein is NAD(P)H-dependent D-xylose reductase XYR1 (XYR1) of Pyricularia oryzae (strain 70-15 / ATCC MYA-4617 / FGSC 8958) (Rice blast fungus).